The following is a 347-amino-acid chain: Phenylalanine--tRNA ligase alpha subunit (347 aa).

E261 lines the Mg(2+) pocket.

It belongs to the class-II aminoacyl-tRNA synthetase family. Phe-tRNA synthetase alpha subunit type 1 subfamily. In terms of assembly, tetramer of two alpha and two beta subunits. Requires Mg(2+) as cofactor.

It localises to the cytoplasm. The enzyme catalyses tRNA(Phe) + L-phenylalanine + ATP = L-phenylalanyl-tRNA(Phe) + AMP + diphosphate + H(+). The chain is Phenylalanine--tRNA ligase alpha subunit from Streptococcus equi subsp. equi (strain 4047).